The following is a 466-amino-acid chain: Argininosuccinate lyase (466 aa).

This sequence belongs to the lyase 1 family. Argininosuccinate lyase subfamily.

It localises to the cytoplasm. It catalyses the reaction 2-(N(omega)-L-arginino)succinate = fumarate + L-arginine. The protein operates within amino-acid biosynthesis; L-arginine biosynthesis; L-arginine from L-ornithine and carbamoyl phosphate: step 3/3. The polypeptide is Argininosuccinate lyase (Synechococcus elongatus (strain ATCC 33912 / PCC 7942 / FACHB-805) (Anacystis nidulans R2)).